Consider the following 494-residue polypeptide: Glycerol kinase (494 aa).

Thr-12 contributes to the ADP binding site. Residues Thr-12, Thr-13, and Ser-14 each coordinate ATP. Thr-12 contacts sn-glycerol 3-phosphate. Arg-16 lines the ADP pocket. 4 residues coordinate sn-glycerol 3-phosphate: Arg-82, Glu-83, Tyr-134, and Asp-243. The glycerol site is built by Arg-82, Glu-83, Tyr-134, Asp-243, and Gln-244. Thr-265 and Gly-308 together coordinate ADP. ATP is bound by residues Thr-265, Gly-308, Gln-312, and Gly-408. Gly-408 and Asn-412 together coordinate ADP.

This sequence belongs to the FGGY kinase family.

The catalysed reaction is glycerol + ATP = sn-glycerol 3-phosphate + ADP + H(+). It participates in polyol metabolism; glycerol degradation via glycerol kinase pathway; sn-glycerol 3-phosphate from glycerol: step 1/1. Its activity is regulated as follows. Inhibited by fructose 1,6-bisphosphate (FBP). Functionally, key enzyme in the regulation of glycerol uptake and metabolism. Catalyzes the phosphorylation of glycerol to yield sn-glycerol 3-phosphate. This is Glycerol kinase from Marinomonas sp. (strain MWYL1).